The chain runs to 125 residues: Small ribosomal subunit protein uS13 (125 aa).

The protein belongs to the universal ribosomal protein uS13 family. In terms of assembly, part of the 30S ribosomal subunit. Forms a loose heterodimer with protein S19. Forms two bridges to the 50S subunit in the 70S ribosome.

In terms of biological role, located at the top of the head of the 30S subunit, it contacts several helices of the 16S rRNA. In the 70S ribosome it contacts the 23S rRNA (bridge B1a) and protein L5 of the 50S subunit (bridge B1b), connecting the 2 subunits; these bridges are implicated in subunit movement. Contacts the tRNAs in the A and P-sites. The sequence is that of Small ribosomal subunit protein uS13 from Rickettsia akari (strain Hartford).